The chain runs to 225 residues: Leucyl/phenylalanyl-tRNA--protein transferase (225 aa).

It belongs to the L/F-transferase family.

The protein localises to the cytoplasm. It carries out the reaction N-terminal L-lysyl-[protein] + L-leucyl-tRNA(Leu) = N-terminal L-leucyl-L-lysyl-[protein] + tRNA(Leu) + H(+). The enzyme catalyses N-terminal L-arginyl-[protein] + L-leucyl-tRNA(Leu) = N-terminal L-leucyl-L-arginyl-[protein] + tRNA(Leu) + H(+). The catalysed reaction is L-phenylalanyl-tRNA(Phe) + an N-terminal L-alpha-aminoacyl-[protein] = an N-terminal L-phenylalanyl-L-alpha-aminoacyl-[protein] + tRNA(Phe). Functions in the N-end rule pathway of protein degradation where it conjugates Leu, Phe and, less efficiently, Met from aminoacyl-tRNAs to the N-termini of proteins containing an N-terminal arginine or lysine. This chain is Leucyl/phenylalanyl-tRNA--protein transferase, found in Nitrobacter hamburgensis (strain DSM 10229 / NCIMB 13809 / X14).